The following is a 215-amino-acid chain: MLEMTEAVASAAHSVFGDRLPLAQRYVEHLATSGIERGLIGPREVPRLWDRHVLNCAVVVELIEIDATVADVGSGAGLPGLCLALARPDLSITLIEPLERRVTWLSEVVADLGLSDQVTLFRMRAEQAVDEVNCSVVTARAVSALDKLAGLTIPLLHGNGQFLAVKGRSAAEEITKAAKAVRKLGGTRTDVLVAGSSVLEEPTTVVRILVGSAHR.

S-adenosyl-L-methionine-binding positions include Gly-73, Leu-78, 125 to 126, and Arg-140; that span reads AE.

Belongs to the methyltransferase superfamily. RNA methyltransferase RsmG family.

The protein resides in the cytoplasm. Its function is as follows. Specifically methylates the N7 position of guanine in position 518 of 16S rRNA. This is Ribosomal RNA small subunit methyltransferase G from Renibacterium salmoninarum (strain ATCC 33209 / DSM 20767 / JCM 11484 / NBRC 15589 / NCIMB 2235).